Here is a 382-residue protein sequence, read N- to C-terminus: Guanine nucleotide exchange factor for Rab-3A (382 aa).

Over residues 1–17 (MWSGPPQPDQGLPPPLA) the composition is skewed to pro residues. Positions 1–60 (MWSGPPQPDQGLPPPLAAVPVPWKSTDPCQGHRESPGALVETSAGEEAQGQEGPAAAQLD) are disordered. The segment covering 45–58 (GEEAQGQEGPAAAQ) has biased composition (low complexity). The stretch at 73–161 (EKGSEFLKEE…AEVTALKTLV (89 aa)) forms a coiled coil. The disordered stretch occupies residues 166–198 (PASPNRELHPQLLSPTKAGPRKGHSRHKSTSST). A phosphoserine mark is found at S168 and S179. Residues 184 to 194 (GPRKGHSRHKS) show a composition bias toward basic residues.

It belongs to the SEC2 family. As to quaternary structure, interacts with RAB3A and IHPK1 through the coiled-coil domain. This interaction is competitive. IHPK1 kinase activity is not required for this interaction.

Functionally, guanine nucleotide exchange factor (GEF) which may activate RAB3A, a GTPase that regulates synaptic vesicle exocytosis. Promotes the exchange of GDP to GTP, converting inactive GDP-bound Rab proteins into their active GTP-bound form. May also activate RAB8A and RAB8B. The protein is Guanine nucleotide exchange factor for Rab-3A (RAB3IL1) of Homo sapiens (Human).